The sequence spans 329 residues: Oligopeptide transport ATP-binding protein AppF (329 aa).

The ABC transporter domain occupies 10 to 261; that stretch reads LELRDVKKYF…PLHPYTQALL (252 aa). ATP is bound at residue 53–60; it reads GESGCGKS.

This sequence belongs to the ABC transporter superfamily.

The protein localises to the cell membrane. In terms of biological role, this protein is a component of an oligopeptide permease, a binding protein-dependent transport system. This APP system can completely substitute for the OPP system in both sporulation and genetic competence, though, unlike OPP, is incapable of transporting tripeptides. Probably responsible for energy coupling to the transport system. This is Oligopeptide transport ATP-binding protein AppF (appF) from Bacillus subtilis (strain 168).